Reading from the N-terminus, the 156-residue chain is MPRKGYIAKREILPDPIYKNRVLTKFINQIMLDGKKGTAESICYNAFELIQEKTGKDPIEVFETALKNVMPVLEVKARRVGGANYQVPIEVRADRRQTLGLRWLVGYARKRSEKTMEERIAGELMDAANNTGGSIKKKEDTHKMAEANKAFAHYRW.

This sequence belongs to the universal ribosomal protein uS7 family. In terms of assembly, part of the 30S ribosomal subunit. Contacts proteins S9 and S11.

In terms of biological role, one of the primary rRNA binding proteins, it binds directly to 16S rRNA where it nucleates assembly of the head domain of the 30S subunit. Is located at the subunit interface close to the decoding center, probably blocks exit of the E-site tRNA. The protein is Small ribosomal subunit protein uS7 of Desulfitobacterium hafniense (strain Y51).